The chain runs to 462 residues: L-seryl-tRNA(Sec) selenium transferase (462 aa).

Lys-295 carries the N6-(pyridoxal phosphate)lysine modification.

It belongs to the SelA family. As to quaternary structure, homodecamer; pentamer of dimers. Binds only one seryl-tRNA(Sec) per dimer. Requires pyridoxal 5'-phosphate as cofactor.

It is found in the cytoplasm. The enzyme catalyses L-seryl-tRNA(Sec) + selenophosphate + H(+) = L-selenocysteinyl-tRNA(Sec) + phosphate. It functions in the pathway aminoacyl-tRNA biosynthesis; selenocysteinyl-tRNA(Sec) biosynthesis; selenocysteinyl-tRNA(Sec) from L-seryl-tRNA(Sec) (bacterial route): step 1/1. In terms of biological role, converts seryl-tRNA(Sec) to selenocysteinyl-tRNA(Sec) required for selenoprotein biosynthesis. This is L-seryl-tRNA(Sec) selenium transferase from Klebsiella pneumoniae subsp. pneumoniae (strain ATCC 700721 / MGH 78578).